The sequence spans 1097 residues: Error-prone DNA polymerase (1097 aa).

The segment at 1039-1097 (PTGRGDEFAHGSPGGGDSRDRSPPKPRDIVVPLCRARHKGIDPEPETMPSAFPKPRDFR) is disordered. The span at 1055–1066 (DSRDRSPPKPRD) shows a compositional bias: basic and acidic residues.

The protein belongs to the DNA polymerase type-C family. DnaE2 subfamily.

It is found in the cytoplasm. The catalysed reaction is DNA(n) + a 2'-deoxyribonucleoside 5'-triphosphate = DNA(n+1) + diphosphate. DNA polymerase involved in damage-induced mutagenesis and translesion synthesis (TLS). It is not the major replicative DNA polymerase. This is Error-prone DNA polymerase from Allorhizobium ampelinum (strain ATCC BAA-846 / DSM 112012 / S4) (Agrobacterium vitis (strain S4)).